We begin with the raw amino-acid sequence, 107 residues long: Phosphoribosyl-ATP pyrophosphatase (107 aa).

It belongs to the PRA-PH family.

The protein resides in the cytoplasm. The catalysed reaction is 1-(5-phospho-beta-D-ribosyl)-ATP + H2O = 1-(5-phospho-beta-D-ribosyl)-5'-AMP + diphosphate + H(+). It functions in the pathway amino-acid biosynthesis; L-histidine biosynthesis; L-histidine from 5-phospho-alpha-D-ribose 1-diphosphate: step 2/9. This chain is Phosphoribosyl-ATP pyrophosphatase, found in Sinorhizobium fredii (strain NBRC 101917 / NGR234).